The sequence spans 757 residues: Endoribonuclease ysh1 (757 aa).

The Zn(2+) site is built by His78, His80, Asp82, His83, His165, and Asp186. The Proton donor role is filled by His403. Residue His425 participates in Zn(2+) binding. Positions 698 to 757 (SQNDVSEDDFENEESDDDKIFEQQTKIEDDVKNENKTEPVEEQKSEEKNEQPNLKKEELS) are disordered. Acidic residues predominate over residues 702–714 (VSEDDFENEESDD). Over residues 715-757 (DKIFEQQTKIEDDVKNENKTEPVEEQKSEEKNEQPNLKKEELS) the composition is skewed to basic and acidic residues.

The protein belongs to the metallo-beta-lactamase superfamily. RNA-metabolizing metallo-beta-lactamase-like family. CPSF2/YSH1 subfamily.

The protein resides in the cytoplasm. The protein localises to the nucleus. Its function is as follows. Component of the cleavage factor I (CF I) involved in pre-mRNA 3'-end processing. In Schizosaccharomyces pombe (strain 972 / ATCC 24843) (Fission yeast), this protein is Endoribonuclease ysh1 (ysh1).